The chain runs to 369 residues: Glutamate 5-kinase (369 aa).

An ATP-binding site is contributed by Lys-8. Residues Ser-49, Asp-136, and Asn-148 each coordinate substrate. ATP contacts are provided by residues 168 to 169 (TD) and 211 to 217 (TGGMATK). In terms of domain architecture, PUA spans 276 to 354 (TGKLYLDSGA…DEISQILGYG (79 aa)).

The protein belongs to the glutamate 5-kinase family.

The protein resides in the cytoplasm. It carries out the reaction L-glutamate + ATP = L-glutamyl 5-phosphate + ADP. It functions in the pathway amino-acid biosynthesis; L-proline biosynthesis; L-glutamate 5-semialdehyde from L-glutamate: step 1/2. Its function is as follows. Catalyzes the transfer of a phosphate group to glutamate to form L-glutamate 5-phosphate. The polypeptide is Glutamate 5-kinase (Rippkaea orientalis (strain PCC 8801 / RF-1) (Cyanothece sp. (strain PCC 8801))).